Here is a 120-residue protein sequence, read N- to C-terminus: DNA-binding protein HQ_1105A (120 aa).

Residues 1–55 (MSETPDDLDELRQQRMEELRDQADGQQSQTSDNTAAAQEAAREKAEAQQEALLKQ) are disordered. Positions 10-23 (ELRQQRMEELRDQA) are enriched in basic and acidic residues. Positions 24–34 (DGQQSQTSDNT) are enriched in polar residues.

The protein belongs to the PDCD5 family.

In Haloquadratum walsbyi (strain DSM 16790 / HBSQ001), this protein is DNA-binding protein HQ_1105A.